Here is a 748-residue protein sequence, read N- to C-terminus: E3 ubiquitin-protein ligase SMURF2 (748 aa).

In terms of domain architecture, C2 spans 1–119 (MSNPGGRRNG…TGYQRLDLCK (119 aa)). Lys-119 participates in a covalent cross-link: Glycyl lysine isopeptide (Lys-Gly) (interchain with G-Cter in ubiquitin). 3 consecutive WW domains span residues 157 to 190 (NDLPDGWEERRTASGRIQYLNHITRTTQWERPTR), 251 to 284 (PDLPEGYEQRTTQQGQVYFLHTQTGVSTWHDPRV), and 297 to 330 (GPLPPGWEIRNTATGRVYFVDHNNRTTQFTDPRL). The region spanning 414–748 (RPKDLWKRLM…IEETCGFAVE (335 aa)) is the HECT domain. Cys-716 serves as the catalytic Glycyl thioester intermediate.

In terms of assembly, interacts (via WW domains) with SMAD1. Interacts (via WW domains) with SMAD2 (via PY-motif). Interacts (via WW domains) with SMAD3 (via PY-motif). Interacts with SMAD6. Interacts with SMAD7 (via PY-motif) and TGFBR1; SMAD7 recruits SMURF2 to the TGF-beta receptor and regulates its degradation. Does not interact with SMAD4; SMAD4 lacks a PY-motif. Interacts with AIMP1. Interacts with NDFIP1 and NDFIP2; this interaction activates the E3 ubiquitin-protein ligase. Interacts with TTC3. In terms of processing, auto-ubiquitinated and ubiquitinated in the presence of RNF11 and UBE2D1. Ubiquitinated by the SCF(FBXL15) complex and TTC3, leading to its degradation by the proteasome. 'Lys-48'-linked polyubiquitination mediated by TRAF4 at Lys-119 leads to SMURF2 proteasomal degradation.

The protein resides in the nucleus. The protein localises to the cytoplasm. It localises to the cell membrane. It is found in the membrane raft. It catalyses the reaction S-ubiquitinyl-[E2 ubiquitin-conjugating enzyme]-L-cysteine + [acceptor protein]-L-lysine = [E2 ubiquitin-conjugating enzyme]-L-cysteine + N(6)-ubiquitinyl-[acceptor protein]-L-lysine.. It participates in protein modification; protein ubiquitination. With respect to regulation, activated by NDFIP1- and NDFIP2-binding. Functionally, E3 ubiquitin-protein ligase which accepts ubiquitin from an E2 ubiquitin-conjugating enzyme in the form of a thioester and then directly transfers the ubiquitin to targeted substrates. Interacts with SMAD7 to trigger SMAD7-mediated transforming growth factor beta/TGF-beta receptor ubiquitin-dependent degradation, thereby down-regulating TGF-beta signaling. In addition, interaction with SMAD7 activates autocatalytic degradation, which is prevented by interaction with AIMP1. Also forms a stable complex with TGF-beta receptor-mediated phosphorylated SMAD1, SMAD2 and SMAD3, and targets SMAD1 and SMAD2 for ubiquitination and proteasome-mediated degradation. SMAD2 may recruit substrates, such as SNON, for ubiquitin-dependent degradation. Negatively regulates TGFB1-induced epithelial-mesenchymal transition and myofibroblast differentiation. In Mus musculus (Mouse), this protein is E3 ubiquitin-protein ligase SMURF2.